Reading from the N-terminus, the 158-residue chain is Phosphopantetheine adenylyltransferase (158 aa).

Residue serine 9 participates in substrate binding. ATP is bound by residues 9–10 (SF) and histidine 17. 3 residues coordinate substrate: lysine 41, valine 73, and lysine 87. Residues 88 to 90 (GLR), glutamate 98, and 122 to 128 (YSFVSSS) contribute to the ATP site.

Belongs to the bacterial CoaD family. In terms of assembly, homohexamer. Mg(2+) serves as cofactor.

It is found in the cytoplasm. It catalyses the reaction (R)-4'-phosphopantetheine + ATP + H(+) = 3'-dephospho-CoA + diphosphate. It functions in the pathway cofactor biosynthesis; coenzyme A biosynthesis; CoA from (R)-pantothenate: step 4/5. Reversibly transfers an adenylyl group from ATP to 4'-phosphopantetheine, yielding dephospho-CoA (dPCoA) and pyrophosphate. This chain is Phosphopantetheine adenylyltransferase, found in Mycobacterium sp. (strain JLS).